The sequence spans 297 residues: ER membrane protein complex subunit 2-B (297 aa).

TPR repeat units lie at residues 87 to 120 (HRVK…DPTN), 155 to 188 (QEAW…NPHN), and 192 to 225 (YQQF…NNHS).

Belongs to the EMC2 family. Component of the ER membrane protein complex (EMC).

It is found in the endoplasmic reticulum membrane. Part of the endoplasmic reticulum membrane protein complex (EMC) that enables the energy-independent insertion into endoplasmic reticulum membranes of newly synthesized membrane proteins. Preferentially accommodates proteins with transmembrane domains that are weakly hydrophobic or contain destabilizing features such as charged and aromatic residues. Involved in the cotranslational insertion of multi-pass membrane proteins in which stop-transfer membrane-anchor sequences become ER membrane spanning helices. It is also required for the post-translational insertion of tail-anchored/TA proteins in endoplasmic reticulum membranes. By mediating the proper cotranslational insertion of N-terminal transmembrane domains in an N-exo topology, with translocated N-terminus in the lumen of the ER, controls the topology of multi-pass membrane proteins. By regulating the insertion of various proteins in membranes, it is indirectly involved in many cellular processes. This Xenopus laevis (African clawed frog) protein is ER membrane protein complex subunit 2-B (emc2-b).